The chain runs to 384 residues: Mannitol-1-phosphate 5-dehydrogenase (384 aa).

4–15 (AVHFGAGNIGRG) lines the NAD(+) pocket.

Belongs to the mannitol dehydrogenase family.

The catalysed reaction is D-mannitol 1-phosphate + NAD(+) = beta-D-fructose 6-phosphate + NADH + H(+). This is Mannitol-1-phosphate 5-dehydrogenase from Lacticaseibacillus paracasei (strain ATCC 334 / BCRC 17002 / CCUG 31169 / CIP 107868 / KCTC 3260 / NRRL B-441) (Lactobacillus paracasei).